A 195-amino-acid polypeptide reads, in one-letter code: UPF0314 protein RHE_CH03951 (195 aa).

4 helical membrane-spanning segments follow: residues 14 to 34, 64 to 84, 128 to 148, and 150 to 170; these read AFWF…EYLM, WYTP…YLIL, DSIL…FFAA, and APVA…GYVI.

The protein belongs to the UPF0314 family.

It is found in the cell membrane. The sequence is that of UPF0314 protein RHE_CH03951 from Rhizobium etli (strain ATCC 51251 / DSM 11541 / JCM 21823 / NBRC 15573 / CFN 42).